Here is a 53-residue protein sequence, read N- to C-terminus: Non-classical export protein 1 (53 aa).

A helical membrane pass occupies residues 7–29 (FLLGKFSDPLLAIMVGCLSYYVY).

The protein belongs to the NCE101 family.

The protein resides in the membrane. In terms of biological role, involved in a novel pathway of export of proteins that lack a cleavable signal sequence. May be part of the export machinery or may also be a substrate for non-classical export. The chain is Non-classical export protein 1 (NCE101) from Saccharomyces cerevisiae (strain ATCC 204508 / S288c) (Baker's yeast).